The primary structure comprises 564 residues: Putative ABC transporter ATP-binding protein PBPRA2240 (564 aa).

2 consecutive ABC transporter domains span residues 3-244 (IEFS…GIRE) and 299-533 (LTVN…ANLT). ATP contacts are provided by residues 37 to 44 (GPSGSGKS) and 332 to 339 (GKNGSGKS).

Belongs to the ABC transporter superfamily.

The protein resides in the cell inner membrane. In terms of biological role, probably part of an ABC transporter complex. Responsible for energy coupling to the transport system. In Photobacterium profundum (strain SS9), this protein is Putative ABC transporter ATP-binding protein PBPRA2240.